The primary structure comprises 126 residues: C-type natriuretic peptide (126 aa).

Positions 1–23 (MHLSQLLACALLLALLSLRPSEA) are cleaved as a signal peptide. The segment at 20–71 (PSEAKPGAPPKVPRTPSGEEVAEPQAAGGGQKKGDKTPGGGGANLKDDRSRL) is disordered. Positions 24 to 73 (KPGAPPKVPRTPSGEEVAEPQAAGGGQKKGDKTPGGGGANLKDDRSRLLR) are excised as a propeptide. Residues 46 to 62 (AGGGQKKGDKTPGGGGA) show a composition bias toward gly residues. Cys-110 and Cys-126 are disulfide-bonded.

It belongs to the natriuretic peptide family. Post-translationally, degraded by IDE (in vitro).

It localises to the secreted. In terms of biological role, hormone which plays a role in endochondral ossification through regulation of cartilaginous growth plate chondrocytes proliferation and differentiation. May also be vasoactive and natriuretic. Acts by specifically binding and stimulating NPR2 to produce cGMP. Binds the clearance receptor NPR3. The protein is C-type natriuretic peptide (NPPC) of Bos taurus (Bovine).